We begin with the raw amino-acid sequence, 634 residues long: DNA gyrase subunit B (634 aa).

The region spanning arginine 416–proline 530 is the Toprim domain. Positions 422, 495, and 497 each coordinate Mg(2+).

The protein belongs to the type II topoisomerase GyrB family. In terms of assembly, heterotetramer, composed of two GyrA and two GyrB chains. In the heterotetramer, GyrA contains the active site tyrosine that forms a transient covalent intermediate with DNA, while GyrB binds cofactors and catalyzes ATP hydrolysis. Mg(2+) is required as a cofactor. It depends on Mn(2+) as a cofactor. The cofactor is Ca(2+).

The protein localises to the cytoplasm. It carries out the reaction ATP-dependent breakage, passage and rejoining of double-stranded DNA.. Functionally, a type II topoisomerase that negatively supercoils closed circular double-stranded (ds) DNA in an ATP-dependent manner to modulate DNA topology and maintain chromosomes in an underwound state. Negative supercoiling favors strand separation, and DNA replication, transcription, recombination and repair, all of which involve strand separation. Also able to catalyze the interconversion of other topological isomers of dsDNA rings, including catenanes and knotted rings. Type II topoisomerases break and join 2 DNA strands simultaneously in an ATP-dependent manner. The polypeptide is DNA gyrase subunit B (Borreliella burgdorferi (strain ATCC 35210 / DSM 4680 / CIP 102532 / B31) (Borrelia burgdorferi)).